Reading from the N-terminus, the 1215-residue chain is Reverse gyrase 2 (1215 aa).

The segment at 3–44 (GGVNAVYMGLCYNCGGNIDEDRLEKGLPCARCLPSPPRRATP) adopts an RG N-terminal-type zinc-finger fold. Positions 13, 16, 31, and 34 each coordinate Zn(2+). ATP contacts are provided by residues Q89 and 106–113 (APTGVGKS). The region spanning 93–249 (AKRLVKGDSF…SLVKARLKLY (157 aa)) is the Helicase ATP-binding domain. A DEAD box motif is present at residues 209 to 212 (DDVD). The tract at residues 614–1215 (VRVKTTLLVV…TGDVMGQSEA (602 aa)) is topoisomerase I. The region spanning 618-783 (TTLLVVESPT…NVRRGRFHEV (166 aa)) is the Toprim domain. E624 is a Mg(2+) binding site. The segment at 702 to 729 (IKRCLDCGAQHTSSSPFCPRCGSPRQVD) adopts an RG C-terminal-type zinc-finger fold. Zn(2+) contacts are provided by C705, C708, C719, and C722. D752 contacts Mg(2+). In terms of domain architecture, Topo IA-type catalytic spans 799–1200 (EKSLIEAQKV…SVWRMVDEAV (402 aa)). Y943 acts as the O-(5'-phospho-DNA)-tyrosine intermediate in catalysis.

The protein in the N-terminal section; belongs to the DEAD box helicase family. DDVD subfamily. This sequence in the C-terminal section; belongs to the type IA topoisomerase family. In terms of assembly, monomer. Zn(2+) is required as a cofactor. Requires Mg(2+) as cofactor.

It localises to the cytoplasm. It catalyses the reaction ATP + H2O = ADP + phosphate + H(+). In terms of biological role, modifies the topological state of DNA by introducing positive supercoils in an ATP-dependent process, increasing the linking number in steps of +1. Binds to single-stranded DNA, transiently cleaves and then rejoins the ends, introducing a positive supercoil in the process. The scissile phosphodiester is attacked by the catalytic tyrosine of the enzyme, resulting in the formation of a DNA-(5'-phosphotyrosyl)-enzyme intermediate. Probably involved in rewinding DNA strands in regions of the chromosome that have opened up to allow replication, transcription, DNA repair and/or for DNA protection. The chain is Reverse gyrase 2 from Aeropyrum pernix (strain ATCC 700893 / DSM 11879 / JCM 9820 / NBRC 100138 / K1).